Reading from the N-terminus, the 242-residue chain is Probable transcriptional regulatory protein Cthe_2075 (242 aa).

This sequence belongs to the TACO1 family.

The protein resides in the cytoplasm. The sequence is that of Probable transcriptional regulatory protein Cthe_2075 from Acetivibrio thermocellus (strain ATCC 27405 / DSM 1237 / JCM 9322 / NBRC 103400 / NCIMB 10682 / NRRL B-4536 / VPI 7372) (Clostridium thermocellum).